The following is a 434-amino-acid chain: Tol-Pal system protein TolB (434 aa).

The first 24 residues, 1 to 24 (MKFSAYLTTLFIVLFSLFIQTVQA), serve as a signal peptide directing secretion.

Belongs to the TolB family. As to quaternary structure, the Tol-Pal system is composed of five core proteins: the inner membrane proteins TolA, TolQ and TolR, the periplasmic protein TolB and the outer membrane protein Pal. They form a network linking the inner and outer membranes and the peptidoglycan layer.

The protein localises to the periplasm. Its function is as follows. Part of the Tol-Pal system, which plays a role in outer membrane invagination during cell division and is important for maintaining outer membrane integrity. This is Tol-Pal system protein TolB from Histophilus somni (strain 129Pt) (Haemophilus somnus).